The sequence spans 127 residues: Glycine cleavage system H protein (127 aa).

The 83-residue stretch at 27–109 (TVRVGITHIA…YGEGWLYEVK (83 aa)) folds into the Lipoyl-binding domain. Residue Lys68 is modified to N6-lipoyllysine.

Belongs to the GcvH family. The glycine cleavage system is composed of four proteins: P, T, L and H. It depends on (R)-lipoate as a cofactor.

Its function is as follows. The glycine cleavage system catalyzes the degradation of glycine. The H protein shuttles the methylamine group of glycine from the P protein to the T protein. The chain is Glycine cleavage system H protein from Corynebacterium jeikeium (strain K411).